The following is a 1534-amino-acid chain: MALTPGWGSSAGPVRPELWLLLWAAAWRLGASACPALCTCTGTTVDCHGTGLQAIPKNIPRNTERLELNGNNITRIHKNDFAGLKQLRVLQLMENQIGAVERGAFDDMKELERLRLNRNQLHMLPELLFQNNQALSRLDLSENAIQAIPRKAFRGATDLKNLQLDKNQISCIEEGAFRALRGLEVLTLNNNNITTIPVSSFNHMPKLRTFRLHSNHLFCDCHLAWLSQWLRQRPTIGLFTQCSGPASLRGLNVAEVQKSEFSCSGQGEAGRVPTCTLSSGSCPAMCTCSNGIVDCRGKGLTAIPANLPETMTEIRLELNGIKSIPPGAFSPYRKLRRIDLSNNQIAEIAPDAFQGLRSLNSLVLYGNKITDLPRGVFGGLYTLQLLLLNANKINCIRPDAFQDLQNLSLLSLYDNKIQSLAKGTFTSLRAIQTLHLAQNPFICDCNLKWLADFLRTNPIETSGARCASPRRLANKRIGQIKSKKFRCSAKEQYFIPGTEDYQLNSECNSDVVCPHKCRCEANVVECSSLKLTKIPERIPQSTAELRLNNNEISILEATGMFKKLTHLKKINLSNNKVSEIEDGAFEGAASVSELHLTANQLESIRSGMFRGLDGLRTLMLRNNRISCIHNDSFTGLRNVRLLSLYDNQITTVSPGAFDTLQSLSTLNLLANPFNCNCQLAWLGGWLRKRKIVTGNPRCQNPDFLRQIPLQDVAFPDFRCEEGQEEGGCLPRPQCPQECACLDTVVRCSNKHLRALPKGIPKNVTELYLDGNQFTLVPGQLSTFKYLQLVDLSNNKISSLSNSSFTNMSQLTTLILSYNALQCIPPLAFQGLRSLRLLSLHGNDISTLQEGIFADVTSLSHLAIGANPLYCDCHLRWLSSWVKTGYKEPGIARCAGPQDMEGKLLLTTPAKKFECQGPPTLAVQAKCDLCLSSPCQNQGTCHNDPLEVYRCACPSGYKGRDCEVSLDSCSSGPCENGGTCHAQEGEDAPFTCSCPTGFEGPTCGVNTDDCVDHACANGGVCVDGVGNYTCQCPLQYEGKACEQLVDLCSPDLNPCQHEAQCVGTPDGPRCECMPGYAGDNCSENQDDCRDHRCQNGAQCMDEVNSYSCLCAEGYSGQLCEIPPHLPAPKSPCEGTECQNGANCVDQGNRPVCQCLPGFGGPECEKLLSVNFVDRDTYLQFTDLQNWPRANITLQVSTAEDNGILLYNGDNDHIAVELYQGHVRVSYDPGSYPSSAIYSAETINDGQFHTVELVAFDQMVNLSIDGGSPMTMDNFGKHYTLNSEAPLYVGGMPVDVNSAAFRLWQILNGTGFHGCIRNLYINNELQDFTKTQMKPGVVPGCEPCRKLYCLHGICQPNATPGPMCHCEAGWVGLHCDQPADGPCHGHKCVHGQCVPLDALSYSCQCQDGYSGALCNQAGALAEPCRGLQCLHGHCQASGTKGAHCVCDPGFSGELCEQESECRGDPVRDFHQVQRGYAICQTTRPLSWVECRGSCPGQGCCQGLRLKRRKFTFECSDGTSFAEEVEKPTKCGCALCA.

The N-terminal stretch at 1–33 (MALTPGWGSSAGPVRPELWLLLWAAAWRLGASA) is a signal peptide. Residues 34-61 (CPALCTCTGTTVDCHGTGLQAIPKNIPR) form the LRRNT domain. LRR repeat units follow at residues 62–83 (NTERLELNGNNITRIHKNDFAG), 86–107 (QLRVLQLMENQIGAVERGAFDD), 110–131 (ELERLRLNRNQLHMLPELLFQN), 134–155 (ALSRLDLSENAIQAIPRKAFRG), 158–179 (DLKNLQLDKNQISCIEEGAFRA), and 182–203 (GLEVLTLNNNNITTIPVSSFNH). N-linked (GlcNAc...) asparagine glycosylation is present at N72. N-linked (GlcNAc...) asparagine glycosylation occurs at N192. The LRRCT 1 domain maps to 215–265 (NHLFCDCHLAWLSQWLRQRPTIGLFTQCSGPASLRGLNVAEVQKSEFSCSG). Positions 273 to 309 (PTCTLSSGSCPAMCTCSNGIVDCRGKGLTAIPANLPE) constitute an LRRNT 2 domain. C286 and C295 are disulfide-bonded. 5 LRR repeats span residues 310-331 (TMTEIRLELNGIKSIPPGAFSP), 334-355 (KLRRIDLSNNQIAEIAPDAFQG), 358-379 (SLNSLVLYGNKITDLPRGVFGG), 382-403 (TLQLLLLNANKINCIRPDAFQD), and 406-427 (NLSLLSLYDNKIQSLAKGTFTS). N-linked (GlcNAc...) asparagine glycosylation is present at N406. One can recognise an LRRCT 2 domain in the interval 439 to 489 (NPFICDCNLKWLADFLRTNPIETSGARCASPRRLANKRIGQIKSKKFRCSA). 4 disulfides stabilise this stretch: C443–C466, C445–C487, C513–C519, and C517–C526. An LRRNT 3 domain is found at 504 to 540 (NSECNSDVVCPHKCRCEANVVECSSLKLTKIPERIPQ). 5 LRR repeats span residues 541 to 562 (STAELRLNNNEISILEATGMFK), 566 to 587 (HLKKINLSNNKVSEIEDGAFEG), 590 to 611 (SVSELHLTANQLESIRSGMFRG), 614 to 635 (GLRTLMLRNNRISCIHNDSFTG), and 638 to 659 (NVRLLSLYDNQITTVSPGAFDT). Residue N571 is glycosylated (N-linked (GlcNAc...) asparagine). The N-linked (GlcNAc...) asparagine glycan is linked to N630. Residues 671–721 (NPFNCNCQLAWLGGWLRKRKIVTGNPRCQNPDFLRQIPLQDVAFPDFRCEE) enclose the LRRCT 3 domain. 2 cysteine pairs are disulfide-bonded: C675–C698 and C677–C719. Residues 725 to 761 (EGGCLPRPQCPQECACLDTVVRCSNKHLRALPKGIPK) enclose the LRRNT 4 domain. N-linked (GlcNAc...) asparagine glycans are attached at residues N762, N801, and N806. LRR repeat units lie at residues 762–783 (NVTELYLDGNQFTLVPGQLSTF), 785–806 (YLQLVDLSNNKISSLSNSSFTN), 809–830 (QLTTLILSYNALQCIPPLAFQG), and 833–854 (SLRLLSLHGNDISTLQEGIFAD). In terms of domain architecture, LRRCT 4 spans 866-916 (NPLYCDCHLRWLSSWVKTGYKEPGIARCAGPQDMEGKLLLTTPAKKFECQG). EGF-like domains lie at 927–962 (DLCLSSPCQNQGTCHNDPLEVYRCACPSGYKGRDCE), 964–1003 (SLDSCSSGPCENGGTCHAQEGEDAPFTCSCPTGFEGPTCG), 1005–1041 (NTDDCVDHACANGGVCVDGVGNYTCQCPLQYEGKACE), 1043–1081 (LVDLCSPDLNPCQHEAQCVGTPDGPRCECMPGYAGDNCS), 1083–1119 (NQDDCRDHRCQNGAQCMDEVNSYSCLCAEGYSGQLCE), and 1127–1163 (PKSPCEGTECQNGANCVDQGNRPVCQCLPGFGGPECE). 18 disulfide bridges follow: C929–C940, C934–C950, C952–C961, C968–C979, C973–C991, C993–C1002, C1009–C1020, C1014–C1029, C1031–C1040, C1047–C1060, C1054–C1069, C1071–C1080, C1087–C1098, C1092–C1107, C1109–C1118, C1131–C1142, C1136–C1151, and C1153–C1162. A glycan (N-linked (GlcNAc...) asparagine) is linked at N1026. A glycan (N-linked (GlcNAc...) asparagine) is linked at N1079. The region spanning 1166–1339 (LSVNFVDRDT…QMKPGVVPGC (174 aa)) is the Laminin G-like domain. N-linked (GlcNAc...) asparagine glycans are attached at residues N1189, N1259, and N1306. Disulfide bonds link C1313-C1339, C1342-C1352, C1347-C1362, C1364-C1373, C1381-C1391, C1386-C1401, C1403-C1412, C1422-C1432, C1427-C1442, C1444-C1453, C1459-C1498, C1477-C1512, C1488-C1528, and C1492-C1530. 3 consecutive EGF-like domains span residues 1340–1374 (EPCRKLYCLHGICQPNATPGPMCHCEAGWVGLHCD), 1377–1413 (ADGPCHGHKCVHGQCVPLDALSYSCQCQDGYSGALCN), and 1418–1454 (LAEPCRGLQCLHGHCQASGTKGAHCVCDPGFSGELCE). The 76-residue stretch at 1459–1534 (CRGDPVRDFH…PTKCGCALCA (76 aa)) folds into the CTCK domain.

Interacts with ROBO1 and GREM1. In terms of tissue distribution, predominantly expressed in adult forebrain. Expressed in fetal brain, lung and kidney.

It localises to the secreted. Thought to act as molecular guidance cue in cellular migration, and function appears to be mediated by interaction with roundabout homolog receptors. During neural development involved in axonal navigation at the ventral midline of the neural tube and projection of axons to different regions. SLIT1 and SLIT2 together seem to be essential for midline guidance in the forebrain by acting as repulsive signal preventing inappropriate midline crossing by axons projecting from the olfactory bulb. This chain is Slit homolog 1 protein (SLIT1), found in Homo sapiens (Human).